The sequence spans 359 residues: Nicotinate N-methyltransferase 1 (359 aa).

Position 226 (Asp226) interacts with S-adenosyl-L-methionine.

This sequence belongs to the class I-like SAM-binding methyltransferase superfamily. Cation-independent O-methyltransferase family. As to expression, highly expressed in anthers, pistils, developing siliques, and developing seeds.

The protein localises to the cytoplasm. It localises to the cytosol. It carries out the reaction nicotinate + S-adenosyl-L-methionine = N-methylnicotinate + S-adenosyl-L-homocysteine. Its function is as follows. Involved in nicotinate detoxification in planta. Catalyzes the conversion of nicotinate to N-methylnicotinate, which is a detoxified form of endogenous nicotinate in planta. This Arabidopsis thaliana (Mouse-ear cress) protein is Nicotinate N-methyltransferase 1.